The primary structure comprises 295 residues: Nucleotide-binding protein YvcJ (295 aa).

16-23 (GMSGAGKT) contacts ATP. 67-70 (DLRG) contributes to the GTP binding site.

Belongs to the RapZ-like family.

In terms of biological role, displays ATPase and GTPase activities. Can also hydrolyze pNPP. May affect the expression of competence via the phosphorylation of a cellular component. This is Nucleotide-binding protein YvcJ (yvcJ) from Bacillus subtilis (strain 168).